Reading from the N-terminus, the 178-residue chain is MDKKTQALVEQYARSLVEVAFEQDAVSTIQEEVRQILTVFAETNLKTFLSQVNVTSEAKKESLSFFQESCSVYMNNFLEVISLNDRANILYDVLKLVLELFDQEDNTYDVTVTSASPLSEEQKTRLLTIVSQKFEIKTRRLVEKIDEELIGGFVIKAKNKFVDTSIRSQLQAFKMNLK.

It belongs to the ATPase delta chain family. As to quaternary structure, F-type ATPases have 2 components, F(1) - the catalytic core - and F(0) - the membrane proton channel. F(1) has five subunits: alpha(3), beta(3), gamma(1), delta(1), epsilon(1). F(0) has three main subunits: a(1), b(2) and c(10-14). The alpha and beta chains form an alternating ring which encloses part of the gamma chain. F(1) is attached to F(0) by a central stalk formed by the gamma and epsilon chains, while a peripheral stalk is formed by the delta and b chains.

The protein resides in the cell membrane. Its function is as follows. F(1)F(0) ATP synthase produces ATP from ADP in the presence of a proton or sodium gradient. F-type ATPases consist of two structural domains, F(1) containing the extramembraneous catalytic core and F(0) containing the membrane proton channel, linked together by a central stalk and a peripheral stalk. During catalysis, ATP synthesis in the catalytic domain of F(1) is coupled via a rotary mechanism of the central stalk subunits to proton translocation. This protein is part of the stalk that links CF(0) to CF(1). It either transmits conformational changes from CF(0) to CF(1) or is implicated in proton conduction. The polypeptide is ATP synthase subunit delta (Streptococcus thermophilus (strain ATCC BAA-250 / LMG 18311)).